A 573-amino-acid chain; its full sequence is Protein DSE1 (573 aa).

WD repeat units follow at residues 144–185 (DFPP…GCAK), 315–351 (RKNTSLDCVWISNHHVAQSLNDKIQIWDIQSCDGKPV), 356–395 (AKKGYIESLKFNENTGALYSSDDQGFVICWDLQNLQNMKY), and 397–448 (ELVH…NGKG). Low complexity predominate over residues 500–509 (SDSSMLSLSN). The interval 500-519 (SDSSMLSLSNESDHSMTETS) is disordered. Residue Lys553 forms a Glycyl lysine isopeptide (Lys-Gly) (interchain with G-Cter in ubiquitin) linkage.

The protein belongs to the WD repeat DSE1 family.

It is found in the bud neck. Functionally, involved in cell wall metabolism and required for the separation of the mother and daughter cells. This Saccharomyces cerevisiae (strain ATCC 204508 / S288c) (Baker's yeast) protein is Protein DSE1 (DSE1).